Consider the following 243-residue polypeptide: 4-hydroxy-tetrahydrodipicolinate reductase (243 aa).

Residues 9–14, 78–80, and 104–107 contribute to the NAD(+) site; these read GANGKM, GTS, and APNF. His-134 functions as the Proton donor/acceptor in the catalytic mechanism. His-135 is a binding site for (S)-2,3,4,5-tetrahydrodipicolinate. The active-site Proton donor is Lys-138. (S)-2,3,4,5-tetrahydrodipicolinate is bound at residue 144-145; that stretch reads GT.

It belongs to the DapB family.

It localises to the cytoplasm. The catalysed reaction is (S)-2,3,4,5-tetrahydrodipicolinate + NAD(+) + H2O = (2S,4S)-4-hydroxy-2,3,4,5-tetrahydrodipicolinate + NADH + H(+). The enzyme catalyses (S)-2,3,4,5-tetrahydrodipicolinate + NADP(+) + H2O = (2S,4S)-4-hydroxy-2,3,4,5-tetrahydrodipicolinate + NADPH + H(+). Its pathway is amino-acid biosynthesis; L-lysine biosynthesis via DAP pathway; (S)-tetrahydrodipicolinate from L-aspartate: step 4/4. Functionally, catalyzes the conversion of 4-hydroxy-tetrahydrodipicolinate (HTPA) to tetrahydrodipicolinate. The protein is 4-hydroxy-tetrahydrodipicolinate reductase of Legionella pneumophila subsp. pneumophila (strain Philadelphia 1 / ATCC 33152 / DSM 7513).